A 101-amino-acid polypeptide reads, in one-letter code: Small ribosomal subunit protein bS18c (101 aa).

Residues 1 to 19 (MNKSKRPFTKSKRSFRRRL) show a composition bias toward basic residues. The tract at residues 1 to 23 (MNKSKRPFTKSKRSFRRRLPPIQ) is disordered.

Belongs to the bacterial ribosomal protein bS18 family. Part of the 30S ribosomal subunit.

Its subcellular location is the plastid. It is found in the chloroplast. The protein is Small ribosomal subunit protein bS18c of Draba nemorosa (Woodland whitlowgrass).